Here is a 166-residue protein sequence, read N- to C-terminus: Large ribosomal subunit protein uL11z (166 aa).

The protein belongs to the universal ribosomal protein uL11 family.

In terms of biological role, binds directly to 26S ribosomal RNA. In Arabidopsis thaliana (Mouse-ear cress), this protein is Large ribosomal subunit protein uL11z (RPL12A).